Consider the following 306-residue polypeptide: Protein-methionine-sulfoxide reductase catalytic subunit MsrP (306 aa).

The tat-type signal signal peptide spans 1 to 45 (MLIRHAPDLTDNDVTDHSLYLKRRTLMAGVAGLGVAGASASHAQA). Mo-molybdopterin-binding positions include Asn-69, 72–73 (YE), Cys-127, Thr-162, Asn-210, Arg-215, and 226–228 (GIK).

The protein belongs to the MsrP family. In terms of assembly, heterodimer of a catalytic subunit (MsrP) and a heme-binding subunit (MsrQ). It depends on Mo-molybdopterin as a cofactor. Predicted to be exported by the Tat system. The position of the signal peptide cleavage has not been experimentally proven.

It is found in the periplasm. It carries out the reaction L-methionyl-[protein] + a quinone + H2O = L-methionyl-(S)-S-oxide-[protein] + a quinol. The enzyme catalyses L-methionyl-[protein] + a quinone + H2O = L-methionyl-(R)-S-oxide-[protein] + a quinol. Functionally, part of the MsrPQ system that repairs oxidized periplasmic proteins containing methionine sulfoxide residues (Met-O), using respiratory chain electrons. Thus protects these proteins from oxidative-stress damage caused by reactive species of oxygen and chlorine generated by the host defense mechanisms. MsrPQ is essential for the maintenance of envelope integrity under bleach stress, rescuing a wide series of structurally unrelated periplasmic proteins from methionine oxidation. The catalytic subunit MsrP is non-stereospecific, being able to reduce both (R-) and (S-) diastereoisomers of methionine sulfoxide. The sequence is that of Protein-methionine-sulfoxide reductase catalytic subunit MsrP from Caulobacter vibrioides (strain ATCC 19089 / CIP 103742 / CB 15) (Caulobacter crescentus).